Here is a 549-residue protein sequence, read N- to C-terminus: Cytoplasmic trehalase (549 aa).

Substrate is bound by residues Arg-168, Trp-175 to Asp-176, Asn-212, Arg-221 to Gln-223, Arg-292 to Glu-294, and Gly-324. Active-site proton donor/acceptor residues include Asp-326 and Glu-509. Glu-525 contributes to the substrate binding site.

This sequence belongs to the glycosyl hydrolase 37 family. In terms of assembly, monomer.

It is found in the cytoplasm. It carries out the reaction alpha,alpha-trehalose + H2O = alpha-D-glucose + beta-D-glucose. It participates in glycan degradation; trehalose degradation; D-glucose from alpha,alpha-trehalose: step 1/1. Hydrolyzes trehalose to glucose. Could be involved, in cells returning to low osmolarity conditions, in the utilization of the accumulated cytoplasmic trehalose, which was synthesized in response to high osmolarity. This chain is Cytoplasmic trehalase, found in Escherichia coli O81 (strain ED1a).